The following is a 114-amino-acid chain: Transmembrane protein 14B (114 aa).

A run of 4 helical transmembrane segments spans residues 8–28 (LVPLHWFGFGYTALVVSGGIV), 34–54 (GSVPSLAAGLLFGSLAGLGAY), 60–80 (PRNVWGFLAATSVTFVGVMGM), and 83–103 (YYYGKFMPVGLIAGASLLMAA).

Belongs to the TMEM14 family. As to quaternary structure, interacts with IQGAP1; this interaction promotes phosphorylation and nuclear translocation of IQGAP1. In terms of tissue distribution, mainly expressed in the outer subventricular zone (OSVZ) of the fetal brains.

It localises to the membrane. Its function is as follows. Primate-specific protein involved in cortical expansion and folding in the developing neocortex. May drive neural progenitor proliferation through nuclear translocation of IQGAP1, which in turn promotes G1/S cell cycle transitions. This Homo sapiens (Human) protein is Transmembrane protein 14B (TMEM14B).